Reading from the N-terminus, the 259-residue chain is Small ribosomal subunit protein mS23 (259 aa).

Positions 230 to 244 (RAASFTGSALPSSEE) are enriched in polar residues. The segment at 230 to 259 (RAASFTGSALPSSEESAPVDEETEKVPQQV) is disordered.

Belongs to the mitochondrion-specific ribosomal protein mS23 family. Component of the mitochondrial small ribosomal subunit.

Its subcellular location is the mitochondrion. The protein is Small ribosomal subunit protein mS23 (rsm25) of Aspergillus terreus (strain NIH 2624 / FGSC A1156).